The primary structure comprises 422 residues: Exodeoxyribonuclease 7 large subunit (422 aa).

The protein belongs to the XseA family. In terms of assembly, heterooligomer composed of large and small subunits.

It localises to the cytoplasm. The enzyme catalyses Exonucleolytic cleavage in either 5'- to 3'- or 3'- to 5'-direction to yield nucleoside 5'-phosphates.. Bidirectionally degrades single-stranded DNA into large acid-insoluble oligonucleotides, which are then degraded further into small acid-soluble oligonucleotides. The sequence is that of Exodeoxyribonuclease 7 large subunit from Leptospira borgpetersenii serovar Hardjo-bovis (strain JB197).